We begin with the raw amino-acid sequence, 445 residues long: 6-phosphogluconate dehydrogenase, decarboxylating (445 aa).

Residues Ala1–Gly4, Asn22–Ser24, Val63–Ala65, and Asn91 each bind NADP(+). Substrate contacts are provided by residues Asn91 and Ser117–Gly119. Lys172 (proton acceptor) is an active-site residue. His175 to Asn176 contributes to the substrate binding site. The Proton donor role is filled by Glu179. Substrate contacts are provided by Tyr180, Lys249, Arg276, Arg434, and His440.

The protein belongs to the 6-phosphogluconate dehydrogenase family. In terms of assembly, homodimer.

The catalysed reaction is 6-phospho-D-gluconate + NADP(+) = D-ribulose 5-phosphate + CO2 + NADPH. It functions in the pathway carbohydrate degradation; pentose phosphate pathway; D-ribulose 5-phosphate from D-glucose 6-phosphate (oxidative stage): step 3/3. Catalyzes the oxidative decarboxylation of 6-phosphogluconate to ribulose 5-phosphate and CO(2), with concomitant reduction of NADP to NADPH. The polypeptide is 6-phosphogluconate dehydrogenase, decarboxylating (gnd) (Pseudescherichia vulneris (Escherichia vulneris)).